The primary structure comprises 499 residues: Glutamyl-tRNA(Gln) amidotransferase subunit B, chloroplastic/mitochondrial (499 aa).

It belongs to the GatB/GatE family. GatB subfamily. Subunit of the heterotrimeric GatCAB amidotransferase (AdT) complex, composed of A, B and C subunits.

The protein localises to the mitochondrion. Its subcellular location is the plastid. It is found in the chloroplast. It catalyses the reaction L-glutamyl-tRNA(Gln) + L-glutamine + ATP + H2O = L-glutaminyl-tRNA(Gln) + L-glutamate + ADP + phosphate + H(+). Functionally, allows the formation of correctly charged Gln-tRNA(Gln) through the transamidation of misacylated Glu-tRNA(Gln) in chloroplasts and mitochondria. The reaction takes place in the presence of glutamine and ATP through an activated gamma-phospho-Glu-tRNA(Gln). This Ostreococcus lucimarinus (strain CCE9901) protein is Glutamyl-tRNA(Gln) amidotransferase subunit B, chloroplastic/mitochondrial.